The sequence spans 1143 residues: cGMP-specific 3',5'-cyclic phosphodiesterase (1143 aa).

Low complexity-rich tracts occupy residues 1-19 and 31-45; these read MHGPVSRSSSSSNMTDVSS and TTSSSSAATTSASSS. Residues 1-167 form a disordered region; that stretch reads MHGPVSRSSS…KASTTASQQD (167 aa). Positions 46–59 are enriched in polar residues; it reads KPLTNGANKTTIST. The segment covering 75 to 84 has biased composition (low complexity); it reads GAIPASSSSG. A compositionally biased stretch (polar residues) spans 96–107; the sequence is SNNNRPAATNRS. The span at 131–153 shows a compositional bias: low complexity; that stretch reads SSSSPSQSPSQTQASIQTQTSQQ. GAF domains lie at 272 to 424 and 456 to 637; these read DIDV…GIGI and NLEC…GLGI. A PDEase domain is found at 667–990; it reads SQDQTEKLTQ…RNWQDLAEKV (324 aa). His-743 serves as the catalytic Proton donor. A divalent metal cation contacts are provided by His-747, His-783, Asp-784, and Asp-894. Disordered stretches follow at residues 1031–1060 and 1090–1143; these read QQSQHGSEDSHTPEHQRSGSRLSMKKTGAL and SHVS…CALL. Basic and acidic residues-rich tracts occupy residues 1036-1047 and 1090-1100; these read GSEDSHTPEHQR and SHVSEDMDDKS. Residues 1109–1127 show a composition bias toward low complexity; that stretch reads ASGSMGRMSASSSTSSTGG. A compositionally biased stretch (basic residues) spans 1133–1143; it reads SKKRSKLCALL. A Cysteine methyl ester modification is found at Cys-1140. Cys-1140 carries S-farnesyl cysteine lipidation. Positions 1141–1143 are cleaved as a propeptide — removed in mature form; that stretch reads ALL.

The protein belongs to the cyclic nucleotide phosphodiesterase family. As to quaternary structure, interacts with PrBP. A divalent metal cation is required as a cofactor.

Its subcellular location is the cell membrane. The catalysed reaction is 3',5'-cyclic GMP + H2O = GMP + H(+). Its function is as follows. Has a role regulating cGMP transport in Malpighian tubule principal cells. The sequence is that of cGMP-specific 3',5'-cyclic phosphodiesterase from Drosophila simulans (Fruit fly).